The chain runs to 144 residues: 3-dehydroquinate dehydratase (144 aa).

The active-site Proton acceptor is tyrosine 23. Substrate-binding residues include asparagine 74, histidine 80, and aspartate 87. Histidine 100 functions as the Proton donor in the catalytic mechanism. Residues 101 to 102 (LS) and arginine 111 contribute to the substrate site.

It belongs to the type-II 3-dehydroquinase family. Homododecamer.

It catalyses the reaction 3-dehydroquinate = 3-dehydroshikimate + H2O. It participates in metabolic intermediate biosynthesis; chorismate biosynthesis; chorismate from D-erythrose 4-phosphate and phosphoenolpyruvate: step 3/7. Functionally, catalyzes a trans-dehydration via an enolate intermediate. This is 3-dehydroquinate dehydratase from Hydrogenovibrio crunogenus (strain DSM 25203 / XCL-2) (Thiomicrospira crunogena).